We begin with the raw amino-acid sequence, 292 residues long: Phosphatidylglycerol--prolipoprotein diacylglyceryl transferase (292 aa).

4 consecutive transmembrane segments (helical) span residues 18-38 (LFGA…GLLI), 67-87 (LLTW…VLFY), 105-125 (GGMS…AFCL), and 129-149 (ISIL…LFLG). An a 1,2-diacyl-sn-glycero-3-phospho-(1'-sn-glycerol)-binding site is contributed by arginine 150. The next 3 membrane-spanning stretches (helical) occupy residues 193–213 (QLYE…ILIW), 222–242 (GAVT…VEFV), and 266–286 (GLTM…YFML).

It belongs to the Lgt family.

The protein resides in the cell inner membrane. The enzyme catalyses L-cysteinyl-[prolipoprotein] + a 1,2-diacyl-sn-glycero-3-phospho-(1'-sn-glycerol) = an S-1,2-diacyl-sn-glyceryl-L-cysteinyl-[prolipoprotein] + sn-glycerol 1-phosphate + H(+). It functions in the pathway protein modification; lipoprotein biosynthesis (diacylglyceryl transfer). Catalyzes the transfer of the diacylglyceryl group from phosphatidylglycerol to the sulfhydryl group of the N-terminal cysteine of a prolipoprotein, the first step in the formation of mature lipoproteins. This Cereibacter sphaeroides (strain ATCC 17025 / ATH 2.4.3) (Rhodobacter sphaeroides) protein is Phosphatidylglycerol--prolipoprotein diacylglyceryl transferase.